Reading from the N-terminus, the 494-residue chain is MNAPVKPSKLIKGATGDWEVVIGLEIHAQVSSNAKLFSGAATAFGGDQNTHVSLVDAAMPGMLPVINEECVRQAIRSGLGLNAKIHLRSVFDRKNYFYPDLPQGYQISQYKSPIVGEGEVVVDLPDGDSITVGIERLHLEQDAGKLLHDQHPTSTFVDLNRSGVALMEIVSKPDLRSSEQAKAYVSKLRTIMRYLGTCDGDMEKGSLRADVNVSVRRPGEPYGTRCEIKNVNSIRFIGQAIEYEARRQIGILEDGGTIDQETRLFDANKGETRSMRSKEEAHDYRYFPDPDLLPLEFTQAYVDDLKAGLPELPDAKKERFVHDFGLSVEDAGVLVSERESAEFYEAVLAQLKDQGRDGKLAANWVINELFGRLNKDGQSIDASPVSAAQLAAIVELIGEGTISGKIAKELFEIVWTEGGDPRTLVEQRGMKQVTDLSAIEKVVDDIVAANPDKVAQVVAKPAMLGWFVGQVMKSSGGKANPQAVNDLLKRKLGL.

Belongs to the GatB/GatE family. GatB subfamily. Heterotrimer of A, B and C subunits.

It catalyses the reaction L-glutamyl-tRNA(Gln) + L-glutamine + ATP + H2O = L-glutaminyl-tRNA(Gln) + L-glutamate + ADP + phosphate + H(+). The enzyme catalyses L-aspartyl-tRNA(Asn) + L-glutamine + ATP + H2O = L-asparaginyl-tRNA(Asn) + L-glutamate + ADP + phosphate + 2 H(+). Its function is as follows. Allows the formation of correctly charged Asn-tRNA(Asn) or Gln-tRNA(Gln) through the transamidation of misacylated Asp-tRNA(Asn) or Glu-tRNA(Gln) in organisms which lack either or both of asparaginyl-tRNA or glutaminyl-tRNA synthetases. The reaction takes place in the presence of glutamine and ATP through an activated phospho-Asp-tRNA(Asn) or phospho-Glu-tRNA(Gln). The polypeptide is Aspartyl/glutamyl-tRNA(Asn/Gln) amidotransferase subunit B (Rhodopseudomonas palustris (strain ATCC BAA-98 / CGA009)).